Reading from the N-terminus, the 341-residue chain is Anthranilate phosphoribosyltransferase (341 aa).

5-phospho-alpha-D-ribose 1-diphosphate contacts are provided by residues glycine 81, 84–85 (GD), serine 89, 91–94 (NIST), 109–117 (KHGNRSASS), and serine 121. Glycine 81 lines the anthranilate pocket. Serine 93 serves as a coordination point for Mg(2+). An anthranilate-binding site is contributed by asparagine 112. Anthranilate is bound at residue arginine 167. Positions 225 and 226 each coordinate Mg(2+).

The protein belongs to the anthranilate phosphoribosyltransferase family. In terms of assembly, homodimer. Mg(2+) serves as cofactor.

It catalyses the reaction N-(5-phospho-beta-D-ribosyl)anthranilate + diphosphate = 5-phospho-alpha-D-ribose 1-diphosphate + anthranilate. The protein operates within amino-acid biosynthesis; L-tryptophan biosynthesis; L-tryptophan from chorismate: step 2/5. Functionally, catalyzes the transfer of the phosphoribosyl group of 5-phosphorylribose-1-pyrophosphate (PRPP) to anthranilate to yield N-(5'-phosphoribosyl)-anthranilate (PRA). The chain is Anthranilate phosphoribosyltransferase from Nocardioides sp. (strain ATCC BAA-499 / JS614).